A 121-amino-acid polypeptide reads, in one-letter code: Large ribosomal subunit protein bL19 (121 aa).

The protein belongs to the bacterial ribosomal protein bL19 family.

In terms of biological role, this protein is located at the 30S-50S ribosomal subunit interface and may play a role in the structure and function of the aminoacyl-tRNA binding site. The polypeptide is Large ribosomal subunit protein bL19 (Neisseria gonorrhoeae (strain ATCC 700825 / FA 1090)).